The sequence spans 226 residues: ATP synthase subunit a 1 (226 aa).

A run of 5 helical transmembrane segments spans residues 20 to 40, 78 to 98, 113 to 133, 174 to 194, and 196 to 216; these read LTIV…WLIT, YLPF…CTVI, ALAL…SGLV, MILV…MNIL, and LLTG…YIAA.

The protein belongs to the ATPase A chain family. In terms of assembly, F-type ATPases have 2 components, CF(1) - the catalytic core - and CF(0) - the membrane proton channel. CF(1) has five subunits: alpha(3), beta(3), gamma(1), delta(1), epsilon(1). CF(0) has four main subunits: a, b, b' and c.

Its subcellular location is the cell inner membrane. Key component of the proton channel; it plays a direct role in the translocation of protons across the membrane. The chain is ATP synthase subunit a 1 from Chlorobaculum parvum (strain DSM 263 / NCIMB 8327) (Chlorobium vibrioforme subsp. thiosulfatophilum).